Consider the following 375-residue polypeptide: Beta sliding clamp (375 aa).

This sequence belongs to the beta sliding clamp family. In terms of assembly, forms a ring-shaped head-to-tail homodimer around DNA which binds and tethers DNA polymerases and other proteins to the DNA. The DNA replisome complex has a single clamp-loading complex (3 tau and 1 each of delta, delta', psi and chi subunits) which binds 3 Pol III cores (1 core on the leading strand and 2 on the lagging strand) each with a beta sliding clamp dimer. Additional proteins in the replisome are other copies of gamma, psi and chi, Ssb, DNA helicase and RNA primase.

It localises to the cytoplasm. Its function is as follows. Confers DNA tethering and processivity to DNA polymerases and other proteins. Acts as a clamp, forming a ring around DNA (a reaction catalyzed by the clamp-loading complex) which diffuses in an ATP-independent manner freely and bidirectionally along dsDNA. Initially characterized for its ability to contact the catalytic subunit of DNA polymerase III (Pol III), a complex, multichain enzyme responsible for most of the replicative synthesis in bacteria; Pol III exhibits 3'-5' exonuclease proofreading activity. The beta chain is required for initiation of replication as well as for processivity of DNA replication. The sequence is that of Beta sliding clamp (dnaN) from Synechococcus elongatus (strain ATCC 33912 / PCC 7942 / FACHB-805) (Anacystis nidulans R2).